Reading from the N-terminus, the 265-residue chain is 4-hydroxy-tetrahydrodipicolinate reductase (265 aa).

NAD(+) contacts are provided by residues 7-12 (GASGRM) and Asp33. Position 34 (Arg34) interacts with NADP(+). Residues 96 to 98 (GTT) and 120 to 123 (AANM) each bind NAD(+). His153 functions as the Proton donor/acceptor in the catalytic mechanism. Residue His154 coordinates (S)-2,3,4,5-tetrahydrodipicolinate. The active-site Proton donor is the Lys157. (S)-2,3,4,5-tetrahydrodipicolinate is bound at residue 163–164 (GT).

Belongs to the DapB family.

It is found in the cytoplasm. The enzyme catalyses (S)-2,3,4,5-tetrahydrodipicolinate + NAD(+) + H2O = (2S,4S)-4-hydroxy-2,3,4,5-tetrahydrodipicolinate + NADH + H(+). It carries out the reaction (S)-2,3,4,5-tetrahydrodipicolinate + NADP(+) + H2O = (2S,4S)-4-hydroxy-2,3,4,5-tetrahydrodipicolinate + NADPH + H(+). It functions in the pathway amino-acid biosynthesis; L-lysine biosynthesis via DAP pathway; (S)-tetrahydrodipicolinate from L-aspartate: step 4/4. Catalyzes the conversion of 4-hydroxy-tetrahydrodipicolinate (HTPA) to tetrahydrodipicolinate. The polypeptide is 4-hydroxy-tetrahydrodipicolinate reductase (Burkholderia orbicola (strain MC0-3)).